Reading from the N-terminus, the 105-residue chain is UPF0145 protein Mevan_1624 (105 aa).

Belongs to the UPF0145 family.

This Methanococcus vannielii (strain ATCC 35089 / DSM 1224 / JCM 13029 / OCM 148 / SB) protein is UPF0145 protein Mevan_1624.